Here is a 410-residue protein sequence, read N- to C-terminus: Histone-lysine N-methyltransferase SUV39H2 (410 aa).

In terms of domain architecture, Chromo spans 47–105 (YEVEYLCDYKVVKDMEYYLVKWKGWPDSTNTWEPLQNLKCPLLLQQFSNDKHNYLSQVK). The region spanning 189–247 (FGCSCTDCFFQKCCPAEAGVLLAYNKNQQIKIPPGTPIYECNSRCQCGPDCPNRIVQKG) is the Pre-SET domain. Positions 191, 193, 196, 201, 202, 229, 233, 235, and 239 each coordinate Zn(2+). The SET domain occupies 250-373 (YSLCIFRTSN…AGEELTFDYQ (124 aa)). Residues 261–263 (RGW) and 330–331 (NH) contribute to the S-adenosyl-L-methionine site. Cysteine 333 serves as a coordination point for Zn(2+). Tyrosine 372 contributes to the S-adenosyl-L-methionine binding site. Phosphoserine is present on residues serine 381, serine 384, and serine 388. The region spanning 394–410 (VRTVCKCGAVTCRGYLN) is the Post-SET domain. Residue cysteine 398 coordinates Zn(2+). Lysine 399 contacts S-adenosyl-L-methionine. The Zn(2+) site is built by cysteine 400 and cysteine 405.

It belongs to the class V-like SAM-binding methyltransferase superfamily. Histone-lysine methyltransferase family. Suvar3-9 subfamily. As to quaternary structure, interacts with SMAD5. The large PER complex involved in the histone methylation is composed of at least PER2, CBX3, TRIM28, SUV39H1 and/or SUV39H2; CBX3 mediates the formation of the complex. Post-translationally, ubiquitinated by the DCX(DCAF13) E3 ubiquitin ligase complex, leading to its degradation.

It is found in the nucleus. The protein resides in the chromosome. Its subcellular location is the centromere. The enzyme catalyses L-lysyl(9)-[histone H3] + 3 S-adenosyl-L-methionine = N(6),N(6),N(6)-trimethyl-L-lysyl(9)-[histone H3] + 3 S-adenosyl-L-homocysteine + 3 H(+). In terms of biological role, histone methyltransferase that specifically trimethylates 'Lys-9' of histone H3 using monomethylated H3 'Lys-9' as substrate. H3 'Lys-9' trimethylation represents a specific tag for epigenetic transcriptional repression by recruiting HP1 (CBX1, CBX3 and/or CBX5) proteins to methylated histones. Mainly functions in heterochromatin regions, thereby playing a central role in the establishment of constitutive heterochromatin at pericentric and telomere regions. H3 'Lys-9' trimethylation is also required to direct DNA methylation at pericentric repeats. SUV39H1 is targeted to histone H3 via its interaction with RB1 and is involved in many processes, such as cell cycle regulation, transcriptional repression and regulation of telomere length. May participate in regulation of higher-order chromatin organization during spermatogenesis. Recruited by the large PER complex to the E-box elements of the circadian target genes such as PER2 itself or PER1, contributes to the conversion of local chromatin to a heterochromatin-like repressive state through H3 'Lys-9' trimethylation. The protein is Histone-lysine N-methyltransferase SUV39H2 (SUV39H2) of Homo sapiens (Human).